The chain runs to 225 residues: Ribulose-phosphate 3-epimerase (225 aa).

Serine 10 provides a ligand contact to substrate. Positions 35, 37, and 68 each coordinate a divalent metal cation. Catalysis depends on aspartate 37, which acts as the Proton acceptor. Residues histidine 68, 144–147, and 175–177 contribute to the substrate site; these read GFGG and DGG. Residue aspartate 175 coordinates a divalent metal cation. Aspartate 175 acts as the Proton donor in catalysis.

This sequence belongs to the ribulose-phosphate 3-epimerase family. The cofactor is a divalent metal cation.

It carries out the reaction D-ribulose 5-phosphate = D-xylulose 5-phosphate. It participates in carbohydrate degradation. Catalyzes the reversible epimerization of D-ribulose 5-phosphate to D-xylulose 5-phosphate. This chain is Ribulose-phosphate 3-epimerase, found in Rhodospirillum rubrum.